The primary structure comprises 98 residues: (4S)-4-hydroxy-5-phosphonooxypentane-2,3-dione isomerase (98 aa).

The ABM domain maps to 2 to 91 (NVTLVEINIK…MSQPRQKRSF (90 aa)).

It belongs to the LsrG family. Homodimer.

The protein resides in the cytoplasm. It carries out the reaction (2S)-2-hydroxy-3,4-dioxopentyl phosphate = 3-hydroxy-2,4-dioxopentyl phosphate. In terms of biological role, involved in the degradation of phospho-AI-2, thereby terminating induction of the lsr operon and closing the AI-2 signaling cycle. Catalyzes the conversion of (4S)-4-hydroxy-5-phosphonooxypentane-2,3-dione (P-DPD) to 3-hydroxy-5-phosphonooxypentane-2,4-dione (P-HPD). The sequence is that of (4S)-4-hydroxy-5-phosphonooxypentane-2,3-dione isomerase from Klebsiella pneumoniae subsp. pneumoniae (strain ATCC 700721 / MGH 78578).